The primary structure comprises 166 residues: Protein SprT (166 aa).

Residues 20–164 (EHLANANRKL…CVRCGDLLVA (145 aa)) enclose the SprT-like domain. H78 lines the Zn(2+) pocket. Residue E79 is part of the active site. A Zn(2+)-binding site is contributed by H82.

The protein belongs to the SprT family. Requires Zn(2+) as cofactor.

The protein localises to the cytoplasm. This Klebsiella pneumoniae subsp. pneumoniae (strain ATCC 700721 / MGH 78578) protein is Protein SprT.